Reading from the N-terminus, the 257-residue chain is NAD kinase (257 aa).

The active-site Proton acceptor is the aspartate 46. NAD(+) is bound by residues 46 to 47, 116 to 117, aspartate 146, alanine 154, 157 to 162, and asparagine 218; these read DG, NE, and TAYNLS.

It belongs to the NAD kinase family. A divalent metal cation is required as a cofactor.

It localises to the cytoplasm. The catalysed reaction is NAD(+) + ATP = ADP + NADP(+) + H(+). Its function is as follows. Involved in the regulation of the intracellular balance of NAD and NADP, and is a key enzyme in the biosynthesis of NADP. Catalyzes specifically the phosphorylation on 2'-hydroxyl of the adenosine moiety of NAD to yield NADP. The protein is NAD kinase of Brucella suis biovar 1 (strain 1330).